The primary structure comprises 340 residues: Fructose-1,6-bisphosphatase class 1 (340 aa).

Residues Glu107, Asp126, Leu128, and Asp129 each coordinate Mg(2+). Asn215 lines the substrate pocket. Glu287 contacts Mg(2+).

It belongs to the FBPase class 1 family. In terms of assembly, homotetramer. Mg(2+) serves as cofactor.

It localises to the cytoplasm. The enzyme catalyses beta-D-fructose 1,6-bisphosphate + H2O = beta-D-fructose 6-phosphate + phosphate. It participates in carbohydrate biosynthesis; gluconeogenesis. The protein is Fructose-1,6-bisphosphatase class 1 of Brucella canis (strain ATCC 23365 / NCTC 10854 / RM-666).